A 240-amino-acid polypeptide reads, in one-letter code: Ribonuclease HII (240 aa).

The 192-residue stretch at 31 to 222 folds into the RNase H type-2 domain; it reads RLIAGVDEAG…VRRALGLETA (192 aa). Residues D37, E38, and D130 each coordinate a divalent metal cation.

This sequence belongs to the RNase HII family. Requires Mn(2+) as cofactor. The cofactor is Mg(2+).

The protein localises to the cytoplasm. It carries out the reaction Endonucleolytic cleavage to 5'-phosphomonoester.. In terms of biological role, endonuclease that specifically degrades the RNA of RNA-DNA hybrids. This is Ribonuclease HII from Xanthomonas campestris pv. campestris (strain 8004).